We begin with the raw amino-acid sequence, 532 residues long: Fatty-acid amide hydrolase 2 (532 aa).

Residues 11-31 (LFLLRALGFLIGLVGRAALVL) form a helical membrane-spanning segment. Catalysis depends on charge relay system residues Lys131 and Ser206. The active-site Acyl-ester intermediate is Ser230.

This sequence belongs to the amidase family. Homodimer. As to expression, expressed in kidney, liver, lung, prostate, heart and ovary.

Its subcellular location is the membrane. The protein localises to the lipid droplet. The catalysed reaction is N-(5Z,8Z,11Z,14Z-eicosatetraenoyl)-ethanolamine + H2O = ethanolamine + (5Z,8Z,11Z,14Z)-eicosatetraenoate. The enzyme catalyses (9Z)-octadecenamide + H2O = (9Z)-octadecenoate + NH4(+). It carries out the reaction N-(9Z-octadecenoyl) ethanolamine + H2O = ethanolamine + (9Z)-octadecenoate. It catalyses the reaction N-hexadecanoylethanolamine + H2O = ethanolamine + hexadecanoate. Its activity is regulated as follows. Inhibited by O-aryl carbamates and alpha-keto heterocytes. Catalyzes the hydrolysis of endogenous amidated lipids like the sleep-inducing lipid oleamide ((9Z)-octadecenamide), the endocannabinoid anandamide (N-(5Z,8Z,11Z,14Z-eicosatetraenoyl)-ethanolamine), as well as other fatty amides, to their corresponding fatty acids, thereby regulating the signaling functions of these molecules. Hydrolyzes monounsaturated substrate anandamide preferentially as compared to polyunsaturated substrates. This Homo sapiens (Human) protein is Fatty-acid amide hydrolase 2 (FAAH2).